Consider the following 307-residue polypeptide: Homoserine kinase (307 aa).

ATP is bound at residue 95–105; sequence PQSRGLGSSAS.

This sequence belongs to the GHMP kinase family. Homoserine kinase subfamily.

It is found in the cytoplasm. The enzyme catalyses L-homoserine + ATP = O-phospho-L-homoserine + ADP + H(+). Its pathway is amino-acid biosynthesis; L-threonine biosynthesis; L-threonine from L-aspartate: step 4/5. Functionally, catalyzes the ATP-dependent phosphorylation of L-homoserine to L-homoserine phosphate. This is Homoserine kinase from Corynebacterium aurimucosum (strain ATCC 700975 / DSM 44827 / CIP 107346 / CN-1) (Corynebacterium nigricans).